A 256-amino-acid chain; its full sequence is Probable septum site-determining protein MinC (256 aa).

Residues 105–143 form a disordered region; sequence RRGATAKPEPADEAEPPVAAAAAEAVPEPAPELAPSAPT. The segment covering 120–142 has biased composition (low complexity); the sequence is PPVAAAAAEAVPEPAPELAPSAP.

The protein belongs to the MinC family. Interacts with MinD and FtsZ.

Functionally, cell division inhibitor that blocks the formation of polar Z ring septums. Rapidly oscillates between the poles of the cell to destabilize FtsZ filaments that have formed before they mature into polar Z rings. Prevents FtsZ polymerization. The sequence is that of Probable septum site-determining protein MinC from Burkholderia vietnamiensis (strain G4 / LMG 22486) (Burkholderia cepacia (strain R1808)).